Here is a 289-residue protein sequence, read N- to C-terminus: MDFSKDIILDNVSYTYAKKTPFEFKALNNTSLKFKKNKVTCVIGTTGSGKSTMIQLTNGLIITETGQTIVGDYAIPANIKKIKEVKRLRKEIGLVFQFPEYQLFQETIEKDIAFGPVNLGENKQEAYKKVPELLKLVQLPEDYVKRSPFELSGGQKRRVALAGIIAMDGNTLVLDEPTGGLDPKGEEDFINLFERLNKEYKKRIIMVTHNMDQVLRIADEVIVMHEGKVIDIGSPFEIFSNIELLTKIEIDPPKLYQLMYKLKNKGIDLLNKNIRTIEEFASELAKVLK.

The 245-residue stretch at 7 to 251 folds into the ABC transporter domain; that stretch reads IILDNVSYTY…IELLTKIEID (245 aa). 44-51 contributes to the ATP binding site; it reads GTTGSGKS.

This sequence belongs to the ABC transporter superfamily. Energy-coupling factor EcfA family. Forms a stable energy-coupling factor (ECF) transporter complex composed of 2 membrane-embedded substrate-binding proteins (S component), 2 ATP-binding proteins (A component) and 2 transmembrane proteins (T component).

The protein localises to the cell membrane. ATP-binding (A) component of a common energy-coupling factor (ECF) ABC-transporter complex. Unlike classic ABC transporters this ECF transporter provides the energy necessary to transport a number of different substrates. In Mycoplasma capricolum subsp. capricolum (strain California kid / ATCC 27343 / NCTC 10154), this protein is Energy-coupling factor transporter ATP-binding protein EcfA2.